We begin with the raw amino-acid sequence, 704 residues long: DNA ligase (704 aa).

Residues 43-47 (DADYD), 92-93 (SL), and Glu-124 contribute to the NAD(+) site. The active-site N6-AMP-lysine intermediate is the Lys-126. Residues Arg-147, Glu-182, Lys-298, and Lys-322 each coordinate NAD(+). Zn(2+)-binding residues include Cys-427, Cys-430, Cys-445, and Cys-451. A BRCT domain is found at 625–704 (PVASPVAGKI…DGWLRLIGDA (80 aa)).

The protein belongs to the NAD-dependent DNA ligase family. LigA subfamily. It depends on Mg(2+) as a cofactor. The cofactor is Mn(2+).

It catalyses the reaction NAD(+) + (deoxyribonucleotide)n-3'-hydroxyl + 5'-phospho-(deoxyribonucleotide)m = (deoxyribonucleotide)n+m + AMP + beta-nicotinamide D-nucleotide.. Functionally, DNA ligase that catalyzes the formation of phosphodiester linkages between 5'-phosphoryl and 3'-hydroxyl groups in double-stranded DNA using NAD as a coenzyme and as the energy source for the reaction. It is essential for DNA replication and repair of damaged DNA. This Cereibacter sphaeroides (strain ATCC 17029 / ATH 2.4.9) (Rhodobacter sphaeroides) protein is DNA ligase.